The chain runs to 365 residues: Baculoviral IAP repeat-containing protein 7 (365 aa).

BIR repeat units follow at residues 7 to 73 and 115 to 180; these read RQRS…PFLQ and RLGS…DFLL. Zn(2+)-binding residues include cysteine 149, cysteine 152, histidine 169, and cysteine 176. A self-inhibits the anti-apoptotic function region spans residues 186-234; it reads AFIRSVQESFFSSPETSPESVGSYEGSPVSSPGSPPVCPFLSTSVAQGA. Serine 198 is subject to Phosphoserine. Position 202 is a phosphoserine; by MAPK1 (serine 202). Residue serine 212 is modified to Phosphoserine. Phosphoserine; by MAPK1 occurs at positions 216 and 219. Positions 278 to 306 are disordered; sequence TESVSVPRAPTQRERPEPPKEPAPPLSTE. Basic and acidic residues predominate over residues 288-297; that stretch reads TQRERPEPPK. Residues 318 to 353 form an RING-type zinc finger; sequence CKVCMDNDVSMVFVPCGHLVVCTECAPNLRHCPICR.

It belongs to the IAP family. Auto-ubiquitinated, and degraded in a 2-step mechanism; a caspase-independent first step and a caspase-dependent second step. In terms of processing, phosphorylated via MAPK-dependent and CDK-dependent pathways during oocyte maturation. Phosphorylation does not appear to affect caspase inhibition or autoubiquitination activity.

The protein localises to the cytoplasm. The enzyme catalyses S-ubiquitinyl-[E2 ubiquitin-conjugating enzyme]-L-cysteine + [acceptor protein]-L-lysine = [E2 ubiquitin-conjugating enzyme]-L-cysteine + N(6)-ubiquitinyl-[acceptor protein]-L-lysine.. Functionally, weak apoptotic suppressor. Has E3 ubiquitin-protein ligase activity. Weak inhibitor of caspase activity. The polypeptide is Baculoviral IAP repeat-containing protein 7 (birc7) (Xenopus tropicalis (Western clawed frog)).